A 317-amino-acid chain; its full sequence is MRALVSVVSLFFLGIQAHSDWSYSGDDGVGESQWSEQYPSCGGERQSPIDVKTEEVMFNPSLKPLSLVNYEKENLEFTMTNNGHTVSIDLPPSMYLETSDGTEFISKAFHFHWGGRDWELSGSEHTIDGIRSIMEAHFVHFNKEYGTYENAKDQKNGLAVLAVLFKIDEYAENTYYSDIISALKNIEKPGETTTLKDTTIRNLLPKDVHHYYTYPGSLTTPPCTENVQWFVLRDKVTLSKAQVVTIENSVMDHNNNTIQNGYRSTQPNNHRVVEANFLNVQDMYSSYHLYLKNMQKEILQPKKQKKTKKNRHFWSRK.

Residues 1–17 (MRALVSVVSLFFLGIQA) form the signal peptide. The 259-residue stretch at 19 to 277 (SDWSYSGDDG…NNHRVVEANF (259 aa)) folds into the Alpha-carbonic anhydrase domain. A disulfide bond links C41 and C223. The Proton donor/acceptor role is filled by H84. Residues H110, H112, and H137 each contribute to the Zn(2+) site. 219 to 220 (TT) contributes to the substrate binding site. The N-linked (GlcNAc...) asparagine glycan is linked to N255.

The protein belongs to the alpha-carbonic anhydrase family. Zn(2+) serves as cofactor. Major constituent of saliva.

The protein localises to the secreted. The catalysed reaction is hydrogencarbonate + H(+) = CO2 + H2O. In terms of biological role, reversible hydration of carbon dioxide. Its role in saliva is unknown. The protein is Carbonic anhydrase 6 (Ca6) of Mus musculus (Mouse).